A 415-amino-acid polypeptide reads, in one-letter code: Ribulose bisphosphate carboxylase/oxygenase activase (415 aa).

Residue glycine 37–threonine 44 coordinates ATP.

This sequence belongs to the RuBisCO activase family.

In terms of biological role, activation of RuBisCO (ribulose-1,5-bisohosphate carboxylase/oxygenase; EC 4.1.1.39) involves the ATP-dependent carboxylation of the epsilon-amino group of lysine leading to a carbamate structure. The protein is Ribulose bisphosphate carboxylase/oxygenase activase (rca) of Anabaena sp. (strain CA / ATCC 33047).